A 231-amino-acid polypeptide reads, in one-letter code: Orotidine 5'-phosphate decarboxylase (231 aa).

Substrate-binding positions include Asp-12, Lys-34, 61–70 (DLKFHDIPNT), Thr-120, Arg-181, Gln-190, Gly-210, and Arg-211. The active-site Proton donor is Lys-63.

The protein belongs to the OMP decarboxylase family. Type 1 subfamily. As to quaternary structure, homodimer.

The catalysed reaction is orotidine 5'-phosphate + H(+) = UMP + CO2. The protein operates within pyrimidine metabolism; UMP biosynthesis via de novo pathway; UMP from orotate: step 2/2. In terms of biological role, catalyzes the decarboxylation of orotidine 5'-monophosphate (OMP) to uridine 5'-monophosphate (UMP). This Alcanivorax borkumensis (strain ATCC 700651 / DSM 11573 / NCIMB 13689 / SK2) protein is Orotidine 5'-phosphate decarboxylase.